Reading from the N-terminus, the 98-residue chain is UPF0251 protein VC0395_0048/VC395_A0084 (98 aa).

It belongs to the UPF0251 family.

This Vibrio cholerae serotype O1 (strain ATCC 39541 / Classical Ogawa 395 / O395) protein is UPF0251 protein VC0395_0048/VC395_A0084.